Here is a 283-residue protein sequence, read N- to C-terminus: Pantothenate synthetase (283 aa).

Residue 31-38 participates in ATP binding; that stretch reads MGALHDGH. His-38 acts as the Proton donor in catalysis. Gln-62 serves as a coordination point for (R)-pantoate. Gln-62 contacts beta-alanine. ATP is bound at residue 148–151; sequence GKKD. Gln-154 contacts (R)-pantoate. ATP contacts are provided by residues Val-177 and 185–188; that span reads KSSR.

This sequence belongs to the pantothenate synthetase family. As to quaternary structure, homodimer.

Its subcellular location is the cytoplasm. It catalyses the reaction (R)-pantoate + beta-alanine + ATP = (R)-pantothenate + AMP + diphosphate + H(+). It participates in cofactor biosynthesis; (R)-pantothenate biosynthesis; (R)-pantothenate from (R)-pantoate and beta-alanine: step 1/1. Catalyzes the condensation of pantoate with beta-alanine in an ATP-dependent reaction via a pantoyl-adenylate intermediate. In Staphylococcus aureus (strain Mu3 / ATCC 700698), this protein is Pantothenate synthetase.